Reading from the N-terminus, the 517-residue chain is Crotonobetaine/carnitine--CoA ligase (517 aa).

It belongs to the ATP-dependent AMP-binding enzyme family.

The catalysed reaction is 4-(trimethylamino)butanoate + ATP + CoA = 4-(trimethylamino)butanoyl-CoA + AMP + diphosphate. It carries out the reaction crotonobetaine + ATP + CoA = crotonobetainyl-CoA + AMP + diphosphate. The enzyme catalyses (R)-carnitine + ATP + CoA = (R)-carnitinyl-CoA + AMP + diphosphate. It participates in amine and polyamine metabolism; carnitine metabolism. In terms of biological role, catalyzes the transfer of CoA to carnitine, generating the initial carnitinyl-CoA needed for the CaiB reaction cycle. Also has activity toward crotonobetaine and gamma-butyrobetaine. The protein is Crotonobetaine/carnitine--CoA ligase of Escherichia coli (strain SE11).